A 162-amino-acid polypeptide reads, in one-letter code: Putative ankyrin repeat protein RBE_0151 (162 aa).

ANK repeat units lie at residues 49 to 77 (EKWTDLHLAVGYKNIKLVQSVCNKHNINI), 81 to 110 (KGRTALELAILGDNLEIVQFLVQNGGVVAP), and 114 to 145 (YGWSAIHLAIKVGNLDIVKYLYENTKFNEHDK).

This Rickettsia bellii (strain RML369-C) protein is Putative ankyrin repeat protein RBE_0151.